Consider the following 540-residue polypeptide: Aquaporin-5 (540 aa).

Residues 1 to 224 (MSGEGTDLPT…ESIDGYNYES (224 aa)) form a disordered region. Topologically, residues 1 to 263 (MSGEGTDLPT…QWMNSNFKNH (263 aa)) are cytoplasmic. Positions 25–44 (PGSSQQQLVPIAHTISSPSK) are enriched in polar residues. Composition is skewed to basic and acidic residues over residues 119–133 (RARE…EREN), 140–155 (RARD…ERSR), 174–194 (YFDD…KGMR), and 204–214 (SGEKVRRKSTD). Residues 264-284 (FVATIGEFVGTTMFLFFAFAG) form a helical membrane-spanning segment. Residues 285–308 (TQVANIDSNTVNTTTGAATGFNIA) lie on the Extracellular side of the membrane. Residue Asn296 is glycosylated (N-linked (GlcNAc...) asparagine). A helical membrane pass occupies residues 309–329 (VQLYIAVIFGFSLMVNVWIFF). Over 330–332 (RIS) the chain is Cytoplasmic. A helical transmembrane segment spans residues 333-353 (GGLFNPAVTLGMVLVGAIPIP). The Extracellular portion of the chain corresponds to 354-356 (RAA). A helical membrane pass occupies residues 357-377 (CLFFAQILGGIAASGMVLGLF). Topologically, residues 378 to 393 (PTTFNVRTTLGASTST) are cytoplasmic. The chain crosses the membrane as a helical span at residues 394–414 (VQGVFIEAILTAELVFTIFML). Residues 415–420 (AKEKHK) lie on the Extracellular side of the membrane. Residues 421-441 (ATFIAPVGIGLALFIAEMVGV) form a helical membrane-spanning segment. At 442 to 467 (YYTGGSLNPARSFGPCVVSGSFDKEH) the chain is on the cytoplasmic side. The chain crosses the membrane as a helical span at residues 468 to 488 (WIYWIGPITGTFIAVFFYKFI). Topologically, residues 489–540 (KMLEYEMANPGQDGDAKNDPTQNEKKREQILEERNRRYEKRNGSLRPGSRLS) are extracellular. A disordered region spans residues 499 to 540 (GQDGDAKNDPTQNEKKREQILEERNRRYEKRNGSLRPGSRLS). Residues 502–530 (GDAKNDPTQNEKKREQILEERNRRYEKRN) are compositionally biased toward basic and acidic residues. N-linked (GlcNAc...) asparagine glycosylation is present at Asn530.

Belongs to the MIP/aquaporin (TC 1.A.8) family.

Its subcellular location is the membrane. The enzyme catalyses H2O(in) = H2O(out). Water channel required to facilitate the transport of water across membranes. May play a role in the vegetative growth. This chain is Aquaporin-5, found in Botryotinia fuckeliana (strain B05.10) (Noble rot fungus).